Consider the following 264-residue polypeptide: Zinc transporter ZupT (264 aa).

5 helical membrane passes run 8–28, 36–56, 75–95, 121–141, and 148–168; these read AFIL…IAFV, FLSV…MIEI, WLTV…DKLI, GLMT…ATFI, and SIAI…GIAV. The Fe(2+) site is built by asparagine 132 and glutamate 135. Residues glutamate 135 and histidine 160 each coordinate Zn(2+). Residues asparagine 161, glutamate 164, and glutamate 193 each contribute to the Fe(2+) site. Glutamate 164 lines the Zn(2+) pocket. Helical transmembrane passes span 197 to 217, 219 to 239, and 244 to 264; these read AIIG…GAIF, AVAG…AEEY, and LAIY…LLFI.

It belongs to the ZIP transporter (TC 2.A.5) family. ZupT subfamily.

The protein resides in the cell membrane. It carries out the reaction Zn(2+)(in) = Zn(2+)(out). Its function is as follows. Mediates zinc uptake. May also transport other divalent cations. The polypeptide is Zinc transporter ZupT (Streptococcus mutans serotype c (strain ATCC 700610 / UA159)).